The sequence spans 287 residues: ADP-dependent (S)-NAD(P)H-hydrate dehydratase (287 aa).

A YjeF C-terminal domain is found at 7 to 283 (TTALVKKFIP…PEISTVMKPF (277 aa)). (6S)-NADPHX contacts are provided by alanine 42 and histidine 159. AMP-binding positions include 196–200 (KGSTD) and glycine 224. A (6S)-NADPHX-binding site is contributed by aspartate 225.

This sequence belongs to the NnrD/CARKD family. In terms of assembly, homotetramer. Mg(2+) is required as a cofactor.

It carries out the reaction (6S)-NADHX + ADP = AMP + phosphate + NADH + H(+). The catalysed reaction is (6S)-NADPHX + ADP = AMP + phosphate + NADPH + H(+). Its function is as follows. Catalyzes the dehydration of the S-form of NAD(P)HX at the expense of ADP, which is converted to AMP. Together with NAD(P)HX epimerase, which catalyzes the epimerization of the S- and R-forms, the enzyme allows the repair of both epimers of NAD(P)HX, a damaged form of NAD(P)H that is a result of enzymatic or heat-dependent hydration. The chain is ADP-dependent (S)-NAD(P)H-hydrate dehydratase from Nitrosopumilus maritimus (strain SCM1).